The chain runs to 529 residues: tRNA-2-methylthio-N(6)-dimethylallyladenosine synthase (529 aa).

An MTTase N-terminal domain is found at Arg18–His134. [4Fe-4S] cluster-binding residues include Cys27, Cys63, Cys97, Cys171, Cys175, and Cys178. Residues Arg157–Glu404 form the Radical SAM core domain. Residues Gln407 to Leu486 enclose the TRAM domain.

It belongs to the methylthiotransferase family. MiaB subfamily. Monomer. [4Fe-4S] cluster serves as cofactor.

It is found in the cytoplasm. The enzyme catalyses N(6)-dimethylallyladenosine(37) in tRNA + (sulfur carrier)-SH + AH2 + 2 S-adenosyl-L-methionine = 2-methylsulfanyl-N(6)-dimethylallyladenosine(37) in tRNA + (sulfur carrier)-H + 5'-deoxyadenosine + L-methionine + A + S-adenosyl-L-homocysteine + 2 H(+). Catalyzes the methylthiolation of N6-(dimethylallyl)adenosine (i(6)A), leading to the formation of 2-methylthio-N6-(dimethylallyl)adenosine (ms(2)i(6)A) at position 37 in tRNAs that read codons beginning with uridine. This is tRNA-2-methylthio-N(6)-dimethylallyladenosine synthase from Mycobacterium sp. (strain KMS).